A 333-amino-acid chain; its full sequence is MIDITLPLTDIHRHLDGNIRAQTILDLGRQFNIALPAKTLEALIPHVQVTSTEPDLVSFLTKLDWGVKVLASLDACRRVAFENIEDAARNGLHYVELRFSPGYMAMAHQLPIAGVVEAVIDGVRDGCNTFGVEARLIGIMSRTFGEAACLQELDALLAHREKITALDLAGDELGFPGSLFLSHFNRARDAGWHITVHAGEAAGPESIWQAIRELGAERIGHGVKAVEDRALMDFLAQQRIGIESCLTSNIQTSTVASLADHPLKTFLEHGVLASLNTDDPAVQGVDIIHEYHVAAPAAGLSREQIRQAQINGLEIAFLSDGEKRALREKVAAA.

The Zn(2+) site is built by His12 and His14. Residues His14, Asp16, and Gly170 each coordinate substrate. His197 is a binding site for Zn(2+). The Proton donor role is filled by Glu200. Position 278 (Asp278) interacts with Zn(2+). A substrate-binding site is contributed by Asp279.

The protein belongs to the metallo-dependent hydrolases superfamily. Adenosine and AMP deaminases family. Adenosine deaminase subfamily. Zn(2+) serves as cofactor.

It catalyses the reaction adenosine + H2O + H(+) = inosine + NH4(+). The enzyme catalyses 2'-deoxyadenosine + H2O + H(+) = 2'-deoxyinosine + NH4(+). Functionally, catalyzes the hydrolytic deamination of adenosine and 2-deoxyadenosine. In Salmonella paratyphi C (strain RKS4594), this protein is Adenosine deaminase.